An 875-amino-acid chain; its full sequence is Serrate RNA effector molecule homolog (875 aa).

Residues 1 to 90 (MGDSDDEYDR…RRDWDEHSSD (90 aa)) are disordered. Gly2 carries the post-translational modification N-acetylglycine. Position 4 is a phosphoserine (Ser4). At Tyr8 the chain carries Phosphotyrosine. Residues 8–73 (YDRRRRDKFR…ERFSPPRHEL (66 aa)) are compositionally biased toward basic and acidic residues. A phosphoserine mark is found at Ser67, Ser74, and Ser136. Residue Lys150 forms a Glycyl lysine isopeptide (Lys-Gly) (interchain with G-Cter in SUMO2) linkage. The disordered stretch occupies residues 272 to 411 (EEEEQAGKTG…KPKDAAGLEC (140 aa)). Positions 297–345 (EGERKANDKDEKKEDGKQAENDSSNDDKTKKSEGDGDKEEKKEEAEKEA) are enriched in basic and acidic residues. Over residues 369 to 386 (SESESEGGQAEEEKEEAE) the composition is skewed to acidic residues. Basic and acidic residues predominate over residues 387–411 (EALKEKEKPKEEEKEKPKDAAGLEC). Phosphoserine is present on residues Ser492 and Ser539. Position 543 is a phosphothreonine (Thr543). Position 569 is a phosphoserine (Ser569). A disordered region spans residues 571 to 597 (EEEELLGSSGGPPPEEPPKEGNPAEIN). Thr670 carries the post-translational modification Phosphothreonine. Ser678 carries the phosphoserine modification. Omega-N-methylarginine is present on residues Arg832, Arg839, and Arg849. The segment at 834-853 (NYDAFRGQGGYPGKPRNRMV) is disordered.

The protein belongs to the ARS2 family. Interacts with CASP8AP2 and ERBB4. Interacts with NCBP1/CBP80 and DROSHA. Interacts with LUZP4. Interacts with NCBP2/CBP20 and NCBP3. Interacts with MTREX. Widely expressed, with a preference for proliferating cells. Highly expressed in hematopoietic tissues and reduced or absent expression in parenchymal organs like liver and kidney. In the brain, expressed in the subventricular zone by niche astrocytes, ependymal cells and neural stem cells. In this cerebral context, expressed in slowly dividing cells.

Its subcellular location is the nucleus. The protein resides in the nucleoplasm. It is found in the cytoplasm. Acts as a mediator between the cap-binding complex (CBC) and the primary microRNAs (miRNAs) processing machinery during cell proliferation. Contributes to the stability and delivery of capped primary miRNA transcripts to the primary miRNA processing complex containing DGCR8 and DROSHA, thereby playing a role in RNA-mediated gene silencing (RNAi) by miRNAs. Binds capped RNAs (m7GpppG-capped RNA); however interaction is probably mediated via its interaction with NCBP1/CBP80 component of the CBC complex. Involved in cell cycle progression at S phase. Does not directly confer arsenite resistance but rather modulates arsenic sensitivity. Independently of its activity on miRNAs, necessary and sufficient to promote neural stem cell self-renewal. Does so by directly binding SOX2 promoter and positively regulating its transcription. This is Serrate RNA effector molecule homolog (Srrt) from Mus musculus (Mouse).